We begin with the raw amino-acid sequence, 100 residues long: uncharacterized protein (100 aa).

Positions 65 to 96 (PELSKNWEKLKKEIEQKHKEIQELISEFDNMF) form a coiled coil.

This is an uncharacterized protein from Acidianus filamentous virus 2 (isolate Italy/Pozzuoli) (AFV-2).